Here is a 220-residue protein sequence, read N- to C-terminus: Putative 3-methyladenine DNA glycosylase (220 aa).

The protein belongs to the DNA glycosylase MPG family.

This is Putative 3-methyladenine DNA glycosylase from Rickettsia bellii (strain RML369-C).